Reading from the N-terminus, the 98-residue chain is Large ribosomal subunit protein uL23 (98 aa).

The protein belongs to the universal ribosomal protein uL23 family. In terms of assembly, part of the 50S ribosomal subunit. Contacts protein L29, and trigger factor when it is bound to the ribosome.

One of the early assembly proteins it binds 23S rRNA. One of the proteins that surrounds the polypeptide exit tunnel on the outside of the ribosome. Forms the main docking site for trigger factor binding to the ribosome. The polypeptide is Large ribosomal subunit protein uL23 (Frankia alni (strain DSM 45986 / CECT 9034 / ACN14a)).